A 429-amino-acid polypeptide reads, in one-letter code: Serine hydroxymethyltransferase (429 aa).

Residues L126 and 130–132 contribute to the (6S)-5,6,7,8-tetrahydrofolate site; that span reads GHL. K235 carries the N6-(pyridoxal phosphate)lysine modification.

Belongs to the SHMT family. In terms of assembly, homodimer. The cofactor is pyridoxal 5'-phosphate.

Its subcellular location is the cytoplasm. It catalyses the reaction (6R)-5,10-methylene-5,6,7,8-tetrahydrofolate + glycine + H2O = (6S)-5,6,7,8-tetrahydrofolate + L-serine. The protein operates within one-carbon metabolism; tetrahydrofolate interconversion. Its pathway is amino-acid biosynthesis; glycine biosynthesis; glycine from L-serine: step 1/1. Its function is as follows. Catalyzes the reversible interconversion of serine and glycine with tetrahydrofolate (THF) serving as the one-carbon carrier. This reaction serves as the major source of one-carbon groups required for the biosynthesis of purines, thymidylate, methionine, and other important biomolecules. Also exhibits THF-independent aldolase activity toward beta-hydroxyamino acids, producing glycine and aldehydes, via a retro-aldol mechanism. The polypeptide is Serine hydroxymethyltransferase (Zymomonas mobilis subsp. mobilis (strain ATCC 31821 / ZM4 / CP4)).